A 294-amino-acid polypeptide reads, in one-letter code: MVTGVFAALGFVVKELVFLVSYVKNNAFPQPLSSSEEKKYLELMAKGDEHARNMLIEHNLRLVAHIVKKFENTGEDAEDLISIGTIGLIKGIESYSAGKGTKLATYAARCIENEIVITKGGCIHPSLIRFNIYGVRIHNGNFFHDKVNNCFFIFKSMPPLFVMNNEILMHLRALKKTKKDVSLHDPIGQDKEGNEISLIDVLKSENEDVIDTIQLNMELEKVKQYIDILDDREKEVIVGRFGLDLKKEKTQREIAKELGISRSYVSRIEKRALMKMFHEFYRAEKEKRKKAKGK.

Residues 1-20 (MVTGVFAALGFVVKELVFLV) constitute a propeptide that is removed on maturation. The interval 1–156 (MVTGVFAALG…VNNCFFIFKS (156 aa)) is encoded by spoIVCB. Positions 79–92 (DLISIGTIGLIKGI) match the Polymerase core binding motif. Residues 114-165 (EIVITKGGCIHPSLIRFNIYGVRIHNGNFFHDKVNNCFFIFKSMPPLFVMNN) form a not present in recombined mature factor region. The interval 157–294 (MPPLFVMNNE…KEKRKKAKGK (138 aa)) is encoded by spoIIIC. A DNA-binding region (H-T-H motif) is located at residues 251 to 270 (QREIAKELGISRSYVSRIEK).

Belongs to the sigma-70 factor family.

In terms of biological role, sigma factors are initiation factors that promote the attachment of RNA polymerase to specific initiation sites and are then released. This sigma factor is responsible for the expression of sporulation specific genes in the mother cell. The protein is RNA polymerase sigma-K factor (sigK) of Bacillus subtilis (strain 168).